The chain runs to 197 residues: Probable UbiX-like flavin prenyltransferase (197 aa).

FMN-binding positions include 9–11 (GAT), Ser36, 87–90 (SMKT), and Arg122.

It belongs to the UbiX/PAD1 family. YclB subfamily. Homododecamer.

The catalysed reaction is dimethylallyl phosphate + FMNH2 = prenylated FMNH2 + phosphate. In terms of biological role, flavin prenyltransferase that catalyzes the synthesis of the prenylated FMN cofactor (prenyl-FMN) for phenolic acid decarboxylase C. Involved in the decarboxylation and detoxification of phenolic derivatives under both aerobic and anaerobic conditions. In Escherichia coli, this protein is Probable UbiX-like flavin prenyltransferase (ecdB).